We begin with the raw amino-acid sequence, 384 residues long: Glucans biosynthesis protein C (384 aa).

The next 10 membrane-spanning stretches (helical) occupy residues 17-37 (AWLMLLGIPFHISLIYSTHSW), 54-74 (FIHAFRMQVFFVISGYFSYML), 91-111 (VGIPMLTAIPLLTLPQFILLQ), 140-160 (LWFLLVLVILTTVSIGIFTWF), 173-193 (AISLAKLSLIFFLLGVAYAAI), 212-232 (FIVMQTLFYVPFFILGALAFI), 240-260 (FTTPSRGCTLGAAVAFIAYLL), 274-294 (TESVITMVMGLWMVNVVFSLG), 311-331 (ASLFIYLVHHPLTLFFGAYIT), and 338-358 (LIGFLCGLIFVMGIALILYEI).

It belongs to the acyltransferase 3 family. OpgC subfamily.

It is found in the cell membrane. It participates in glycan metabolism; osmoregulated periplasmic glucan (OPG) biosynthesis. Necessary for the succinyl substitution of periplasmic glucans. Could catalyze the transfer of succinyl residues from the cytoplasmic side of the membrane to the nascent glucan backbones on the periplasmic side of the membrane. The polypeptide is Glucans biosynthesis protein C (Salmonella heidelberg (strain SL476)).